The following is a 344-amino-acid chain: Phenylalanine--tRNA ligase alpha subunit (344 aa).

Residue Glu255 coordinates Mg(2+).

It belongs to the class-II aminoacyl-tRNA synthetase family. Phe-tRNA synthetase alpha subunit type 1 subfamily. Tetramer of two alpha and two beta subunits. It depends on Mg(2+) as a cofactor.

It localises to the cytoplasm. The catalysed reaction is tRNA(Phe) + L-phenylalanine + ATP = L-phenylalanyl-tRNA(Phe) + AMP + diphosphate + H(+). This Persephonella marina (strain DSM 14350 / EX-H1) protein is Phenylalanine--tRNA ligase alpha subunit.